Here is a 255-residue protein sequence, read N- to C-terminus: Syntaxin-23 (255 aa).

The disordered stretch occupies residues methionine 1 to glutamine 31. Position 2 is an N-acetylserine (serine 2). Positions leucine 14–glutamine 31 are enriched in polar residues. The t-SNARE coiled-coil homology domain occupies glutamate 184–histidine 246.

It belongs to the syntaxin family. Part of the t-SNARE complex. Interacts with RGS1. Expressed at higher levels in leaves, flowers and stems than in roots.

Its subcellular location is the membrane. Functionally, may function in the docking or fusion of transport vesicles with the prevacuolar membrane. The protein is Syntaxin-23 (SYP23) of Arabidopsis thaliana (Mouse-ear cress).